The sequence spans 486 residues: 2-succinylbenzoate--CoA ligase (486 aa).

The protein belongs to the ATP-dependent AMP-binding enzyme family. MenE subfamily.

It catalyses the reaction 2-succinylbenzoate + ATP + CoA = 2-succinylbenzoyl-CoA + AMP + diphosphate. The protein operates within quinol/quinone metabolism; 1,4-dihydroxy-2-naphthoate biosynthesis; 1,4-dihydroxy-2-naphthoate from chorismate: step 5/7. Its pathway is quinol/quinone metabolism; menaquinone biosynthesis. In terms of biological role, converts 2-succinylbenzoate (OSB) to 2-succinylbenzoyl-CoA (OSB-CoA). This is 2-succinylbenzoate--CoA ligase from Bacillus pumilus (strain SAFR-032).